A 202-amino-acid polypeptide reads, in one-letter code: Holliday junction resolvase RecU (202 aa).

The Mg(2+) site is built by Thr-85, Asp-87, Glu-100, and Gln-119.

Belongs to the RecU family. Mg(2+) is required as a cofactor.

It is found in the cytoplasm. It catalyses the reaction Endonucleolytic cleavage at a junction such as a reciprocal single-stranded crossover between two homologous DNA duplexes (Holliday junction).. Functionally, endonuclease that resolves Holliday junction intermediates in genetic recombination. Cleaves mobile four-strand junctions by introducing symmetrical nicks in paired strands. Promotes annealing of linear ssDNA with homologous dsDNA. Required for DNA repair, homologous recombination and chromosome segregation. This chain is Holliday junction resolvase RecU, found in Streptococcus equi subsp. zooepidemicus (strain MGCS10565).